The sequence spans 395 residues: Mitogen-activated protein kinase 6 (395 aa).

Positions methionine 1–asparagine 35 are disordered. The span at alanine 17–serine 27 shows a compositional bias: low complexity. Positions lysine 63–leucine 348 constitute a Protein kinase domain. ATP contacts are provided by residues isoleucine 69–valine 77 and lysine 92. The active-site Proton acceptor is aspartate 189. Position 221 is a phosphothreonine (threonine 221). Positions threonine 221 to tyrosine 223 match the TXY motif. Position 223 is a phosphotyrosine (tyrosine 223). Threonine 226 is subject to Phosphothreonine.

This sequence belongs to the protein kinase superfamily. CMGC Ser/Thr protein kinase family. MAP kinase subfamily. Interacts with MEKK1, MKK1 and MKK2. May form a ternary complex with MEKK1 and MKK1 or MKK2. Interacts with NDPK2, AP2C1, MKP1 and PTP1. Interacts with DSPTP1B/MKP2, especially during HR-like responses triggered by fungal elicitors. Interacts with MKK4, MKK5 and MKK6. Binds to LIP5. Interacts with VQ4 and IKU1/VQ14. Interacts with RACK1A, RACK1B and RACK1C. Interacts with PTP1. Interacts with FLZ9. Binds to BASL and YDA. Dually phosphorylated on Thr-221 and Tyr-223, which activates the enzyme. Dephosphorylated by DSPTP1B/MKP2.

The protein localises to the cytoplasm. Its subcellular location is the nucleus. It is found in the cell cortex. The catalysed reaction is L-seryl-[protein] + ATP = O-phospho-L-seryl-[protein] + ADP + H(+). It carries out the reaction L-threonyl-[protein] + ATP = O-phospho-L-threonyl-[protein] + ADP + H(+). Its activity is regulated as follows. Activated by threonine and tyrosine phosphorylation. Activated by the MAP kinase kinases MKK2, MKK3, MKK4, MKK5, MKK7 and MKK9. Activated in response to touch, wounding, low temperature, low humidity, salt stress, hydrogen peroxide, ozone, ACC (an ethylene precursor), jasmonic acid (JA), mastoparan and UVC. Activated in response to elicitors: oligogalacturonides, hexameric chitin fragments, fungal xylanase, and the bacterial flagellin and harpin. Activated upon Pseudomonas syringae pv. tomato DC3000 infection. Repressed by the protein phosphatase 2C AP2C1 and the protein-tyrosine-phosphatases MKP1 and PTP1. Repressed by DSPTP1B/MKP2-mediated dephosphorylation. Activated by polarized BASL. Triggered by MKKK20 in response to various abiotic stresses, including osmotic stress, cold and reactive oxygen species (ROS). Activated by MKK5 in response to abscisic acid (ABA). Its function is as follows. Mitogen-activated protein kinase (MAPK) which regulates abscisic acid (ABA) responses in a MAPKKK20-MKK5-MPK6 cascade involved in root growth (e.g. root cell division and elongation) and stomatal response. Involved in oxidative stress-mediated signaling cascade (such as ozone). Involved in the innate immune MAP kinase signaling cascade (MEKK1, MKK4/MKK5 and MPK3/MPK6) downstream of bacterial flagellin receptor FLS2. May be involved in hypersensitive response (HR)-mediated signaling cascade by modulating LIP5 phosphorylation and subsequent multivesicular bodies (MVBs) trafficking. May phosphorylate regulators of WRKY transcription factors. Phosphorylates 1-aminocyclopropane-1-carboxylic acid synthases (ACS2 and ACS6) and may be involved in the regulation of bacterial elicitor flagellin-induced ethylene production. Regulates locally gene-mediated and basal resistance response to certain pathogens. May be involved in the cold and salinity stress-mediated MAP kinase signaling cascade (MEKK1, MKK1/MKK2 and MPK4/MPK6). MKK1-MPK6 module mediates abscisic acid (ABA)-dependent CAT1 expression with H(2)O(2) production and response to drought and salt stress. MKK1-MPK6 module is also involved in sugar signaling during the process of seed germination. MKK3-MPK6 module plays an important role in the jasmonate signal transduction pathway through the negative regulation of MYC2/JIN1 expression. MKK9-MPK3/MPK6 module phosphorylates and activates EIN3, leading to the promotion of EIN3-mediated transcription in ethylene signaling. MPK3/MPK6 cascade regulates camalexin synthesis through transcriptional regulation of the biosynthetic genes after pathogen infection. MKK9-MPK6 module positively regulates leaf senescence. YDA-MKK4/MKK5-MPK3/MPK6 module regulates stomatal cell fate before the guard mother cell (GMC) is specified. When activated, reinforces the feedback loop by phosphorylating BASL, and inhibits stomatal fate by phosphorylating SPCH. This MAPK cascade also functions downstream of the ER receptor in regulating coordinated local cell proliferation, which shapes the morphology of plant organs. This chain is Mitogen-activated protein kinase 6, found in Arabidopsis thaliana (Mouse-ear cress).